We begin with the raw amino-acid sequence, 94 residues long: Pyrimidine/purine nucleoside phosphorylase (94 aa).

Belongs to the nucleoside phosphorylase PpnP family.

It carries out the reaction a purine D-ribonucleoside + phosphate = a purine nucleobase + alpha-D-ribose 1-phosphate. The enzyme catalyses adenosine + phosphate = alpha-D-ribose 1-phosphate + adenine. The catalysed reaction is cytidine + phosphate = cytosine + alpha-D-ribose 1-phosphate. It catalyses the reaction guanosine + phosphate = alpha-D-ribose 1-phosphate + guanine. It carries out the reaction inosine + phosphate = alpha-D-ribose 1-phosphate + hypoxanthine. The enzyme catalyses thymidine + phosphate = 2-deoxy-alpha-D-ribose 1-phosphate + thymine. The catalysed reaction is uridine + phosphate = alpha-D-ribose 1-phosphate + uracil. It catalyses the reaction xanthosine + phosphate = alpha-D-ribose 1-phosphate + xanthine. Catalyzes the phosphorolysis of diverse nucleosides, yielding D-ribose 1-phosphate and the respective free bases. Can use uridine, adenosine, guanosine, cytidine, thymidine, inosine and xanthosine as substrates. Also catalyzes the reverse reactions. In Klebsiella pneumoniae (strain 342), this protein is Pyrimidine/purine nucleoside phosphorylase.